A 242-amino-acid chain; its full sequence is 1-(5-phosphoribosyl)-5-[(5-phosphoribosylamino)methylideneamino] imidazole-4-carboxamide isomerase (242 aa).

The active-site Proton acceptor is the Asp-10. The active-site Proton donor is the Asp-132.

It belongs to the HisA/HisF family.

The protein resides in the cytoplasm. The enzyme catalyses 1-(5-phospho-beta-D-ribosyl)-5-[(5-phospho-beta-D-ribosylamino)methylideneamino]imidazole-4-carboxamide = 5-[(5-phospho-1-deoxy-D-ribulos-1-ylimino)methylamino]-1-(5-phospho-beta-D-ribosyl)imidazole-4-carboxamide. It participates in amino-acid biosynthesis; L-histidine biosynthesis; L-histidine from 5-phospho-alpha-D-ribose 1-diphosphate: step 4/9. This chain is 1-(5-phosphoribosyl)-5-[(5-phosphoribosylamino)methylideneamino] imidazole-4-carboxamide isomerase, found in Streptococcus sanguinis (strain SK36).